A 610-amino-acid polypeptide reads, in one-letter code: T-cell immunomodulatory protein (610 aa).

The N-terminal stretch at 1-32 (MAAGRLPSARAVLAPLFLGLALLSVGPAPARA) is a signal peptide. 7 N-linked (GlcNAc...) asparagine glycosylation sites follow: Asn35, Asn123, Asn138, Asn145, Asn150, Asn175, and Asn241. The FG-GAP 1; atypical repeat unit spans residues 98-135 (LVTSVVPGDYDGDSQMDVLLTYFPQNHTNSELGAVIFW). The FG-GAP 2; atypical repeat unit spans residues 153–183 (FHDQPLIMDFNGDLIPDVFGITNESSQPQIL). One copy of the FG-GAP 3; atypical repeat lies at 256 to 291 (VVGQSAFADFDGDGHMDHLLPGCEDKDCQKSAIYLM). 3 N-linked (GlcNAc...) asparagine glycosylation sites follow: Asn351, Asn369, and Asn480. A helical transmembrane segment spans residues 565-585 (VLLTAVALIGVCIFILAIIAI).

The protein belongs to the TIP family. Interacts with RUVBL1, RUVBL2 and alpha-tubulin.

It is found in the secreted. The protein resides in the membrane. Its function is as follows. Modulator of T-cell function. Has a protective effect in graft versus host disease model. The polypeptide is T-cell immunomodulatory protein (Mus musculus (Mouse)).